The sequence spans 344 residues: MITERQSNILNLIVDLFTQTHEPVGSKALQSVIASSSATIRNDMAKLEKLGLLEKAHTSSGRMPSAAGFKYFVEHSLNLGSIDEQDFYQLVKAFDFEAFKLEDVLLRASQMLSDMTGYTAAILDVEPARQRLTGFDIVQLSSHDALAVLTLDESKPLTVQFAIPKNFMNRDLLVLKGIVADRLLGKDVMTVHYKLRTEIPQIVQKYFTVTDNVLDLFDYIFVGLFRETIFVSGKVAALDYAGLVTYQFLDEEQRLALSIRQSLSEEEMATVQVADSSEPALANVTLLTYKFLIPYRGFGLLSLIGPVDMDYRRSVSLINVIGQLLAVKLRDYYRYLNSNHYEVH.

This sequence belongs to the HrcA family.

In terms of biological role, negative regulator of class I heat shock genes (grpE-dnaK-dnaJ and groELS operons). Prevents heat-shock induction of these operons. The polypeptide is Heat-inducible transcription repressor HrcA (Streptococcus equi subsp. zooepidemicus (strain MGCS10565)).